The following is a 161-amino-acid chain: D-amino-acid N-acetyltransferase HPA3 (161 aa).

N-acetylserine is present on Ser-2. The region spanning 14–161 (IVVKAIEPKD…DKVLYKRNGY (148 aa)) is the N-acetyltransferase domain. 98 to 111 (LYVTERARVKGVGR) is an acetyl-CoA binding site.

The protein belongs to the acetyltransferase family. GNAT subfamily. Post-translationally, autoacetylates in an intermolecular reaction.

Its subcellular location is the cytoplasm. The protein localises to the nucleus. It catalyses the reaction a D-alpha-amino acid + acetyl-CoA = an N-acetyl-D-amino acid + CoA + H(+). N-acetyltransferase that acts on a wide range of D-amino acids. Catalyzes the N-acetylation through an ordered bi-bi mechanism, in which acetyl-CoA is the first substrate to be bound and CoA is the last product to be liberated. D-amino acids are toxic for the cell and their N-acetylation, preceding removal from cells, plays an important role in detoxification of D-amino acids. In vitro, capable of acetylating histone H4 at 'Lys-8' and polyamines like putrescine, spermidine and spermine. This is D-amino-acid N-acetyltransferase HPA3 from Saccharomyces cerevisiae (strain ATCC 204508 / S288c) (Baker's yeast).